Consider the following 365-residue polypeptide: Bifunctional chorismate mutase/prephenate dehydratase (365 aa).

Positions 1–96 (MSEADQLKAL…SCLALEQPLR (96 aa)) constitute a Chorismate mutase domain. Substrate-binding residues include R11, R28, K39, and E57. The region spanning 97-272 (VAYLGPEGTF…NSTRFLIIGS (176 aa)) is the Prephenate dehydratase domain. One can recognise an ACT domain in the interval 284-361 (SIIVSMRNKP…VALKVLGSYP (78 aa)).

The protein resides in the cytoplasm. It catalyses the reaction chorismate = prephenate. It carries out the reaction prephenate + H(+) = 3-phenylpyruvate + CO2 + H2O. It functions in the pathway amino-acid biosynthesis; L-phenylalanine biosynthesis; phenylpyruvate from prephenate: step 1/1. It participates in metabolic intermediate biosynthesis; prephenate biosynthesis; prephenate from chorismate: step 1/1. Its function is as follows. Catalyzes the Claisen rearrangement of chorismate to prephenate and the decarboxylation/dehydration of prephenate to phenylpyruvate. The sequence is that of Bifunctional chorismate mutase/prephenate dehydratase from Stutzerimonas stutzeri (Pseudomonas stutzeri).